The sequence spans 530 residues: Ubiquitin carboxyl-terminal hydrolase 17-like protein 10 (530 aa).

The USP domain maps to 80–375 (AGLQNMGNTC…QAYVLFYIQK (296 aa)). Catalysis depends on Cys-89, which acts as the Nucleophile. Residue His-334 is the Proton acceptor of the active site. Composition is skewed to basic and acidic residues over residues 382-392 (SESVSRGREPR) and 398-410 (DTDR…ELKR). Disordered regions lie at residues 382-410 (SESV…ELKR) and 477-530 (NHHP…LVCQ). A compositionally biased stretch (low complexity) spans 484–495 (SSLLNLSSTTPT). Residues 496-505 (DQESMNTGTL) are compositionally biased toward polar residues. Positions 510–524 (GRTRRSKGKNKHSKR) are enriched in basic residues.

Belongs to the peptidase C19 family. USP17 subfamily.

It is found in the nucleus. It localises to the endoplasmic reticulum. The catalysed reaction is Thiol-dependent hydrolysis of ester, thioester, amide, peptide and isopeptide bonds formed by the C-terminal Gly of ubiquitin (a 76-residue protein attached to proteins as an intracellular targeting signal).. In terms of biological role, deubiquitinating enzyme that removes conjugated ubiquitin from specific proteins to regulate different cellular processes that may include cell proliferation, progression through the cell cycle, apoptosis, cell migration, and the cellular response to viral infection. The sequence is that of Ubiquitin carboxyl-terminal hydrolase 17-like protein 10 (USP17L10) from Homo sapiens (Human).